Consider the following 1046-residue polypeptide: uncharacterized protein (1046 aa).

The span at Leu-594–Ser-615 shows a compositional bias: low complexity. A disordered region spans residues Leu-594 to Pro-622.

This is an uncharacterized protein from Invertebrate iridescent virus 6 (IIV-6).